We begin with the raw amino-acid sequence, 832 residues long: Alpha-glucan phosphorylase, H isozyme (832 aa).

Lys-678 carries the N6-(pyridoxal phosphate)lysine modification.

This sequence belongs to the glycogen phosphorylase family. Requires pyridoxal 5'-phosphate as cofactor.

It localises to the cytoplasm. It catalyses the reaction [(1-&gt;4)-alpha-D-glucosyl](n) + phosphate = [(1-&gt;4)-alpha-D-glucosyl](n-1) + alpha-D-glucose 1-phosphate. Functionally, phosphorylase is an important allosteric enzyme in carbohydrate metabolism. Enzymes from different sources differ in their regulatory mechanisms and in their natural substrates. However, all known phosphorylases share catalytic and structural properties. The protein is Alpha-glucan phosphorylase, H isozyme of Triticum aestivum (Wheat).